The following is a 585-amino-acid chain: DNA ligase (585 aa).

Glu278 is a binding site for ATP. Lys280 acts as the N6-AMP-lysine intermediate in catalysis. Arg285, Arg301, Glu330, Phe370, Arg444, and Lys450 together coordinate ATP.

It belongs to the ATP-dependent DNA ligase family. It depends on Mg(2+) as a cofactor.

The enzyme catalyses ATP + (deoxyribonucleotide)n-3'-hydroxyl + 5'-phospho-(deoxyribonucleotide)m = (deoxyribonucleotide)n+m + AMP + diphosphate.. DNA ligase that seals nicks in double-stranded DNA during DNA replication, DNA recombination and DNA repair. This Haloferax volcanii (strain ATCC 29605 / DSM 3757 / JCM 8879 / NBRC 14742 / NCIMB 2012 / VKM B-1768 / DS2) (Halobacterium volcanii) protein is DNA ligase.